The sequence spans 113 residues: Large ribosomal subunit protein bL17 (113 aa).

Belongs to the bacterial ribosomal protein bL17 family. Part of the 50S ribosomal subunit. Contacts protein L32.

This chain is Large ribosomal subunit protein bL17, found in Clostridium novyi (strain NT).